A 121-amino-acid chain; its full sequence is Basic phospholipase A2 homolog piratoxin-2 (121 aa).

7 cysteine pairs are disulfide-bonded: cysteine 26–cysteine 115, cysteine 28–cysteine 44, cysteine 43–cysteine 95, cysteine 49–cysteine 121, cysteine 50–cysteine 88, cysteine 57–cysteine 81, and cysteine 75–cysteine 86. The tract at residues 105 to 117 is important for membrane-damaging activities in eukaryotes and bacteria; heparin-binding; that stretch reads KKYRYHLKPFCKK.

Belongs to the phospholipase A2 family. Group II subfamily. K49 sub-subfamily. Homodimer; non-covalently linked. Expressed by the venom gland.

The protein localises to the secreted. In terms of biological role, snake venom phospholipase A2 (PLA2) homolog that lacks enzymatic activity. Shows myotoxic activity and edema-inducing activities in vivo. A model of myotoxic mechanism has been proposed: an apo Lys49-PLA2 is activated by the entrance of a hydrophobic molecule (e.g. fatty acid) at the hydrophobic channel of the protein leading to a reorientation of a monomer. This reorientation causes a transition between 'inactive' to 'active' states, causing alignment of C-terminal and membrane-docking sites (MDoS) side-by-side and putting the membrane-disruption sites (MDiS) in the same plane, exposed to solvent and in a symmetric position for both monomers. The MDoS region stabilizes the toxin on membrane by the interaction of charged residues with phospholipid head groups. Subsequently, the MDiS region destabilizes the membrane with penetration of hydrophobic residues. This insertion causes a disorganization of the membrane, allowing an uncontrolled influx of ions (i.e. calcium and sodium), and eventually triggering irreversible intracellular alterations and cell death. The chain is Basic phospholipase A2 homolog piratoxin-2 from Bothrops pirajai (Piraja's lancehead).